The following is a 72-amino-acid chain: Translation initiation factor IF-1 (72 aa).

The region spanning 1-72 (MAKEDTLEFP…TKGRINYRFK (72 aa)) is the S1-like domain.

It belongs to the IF-1 family. As to quaternary structure, component of the 30S ribosomal translation pre-initiation complex which assembles on the 30S ribosome in the order IF-2 and IF-3, IF-1 and N-formylmethionyl-tRNA(fMet); mRNA recruitment can occur at any time during PIC assembly.

It localises to the cytoplasm. In terms of biological role, one of the essential components for the initiation of protein synthesis. Stabilizes the binding of IF-2 and IF-3 on the 30S subunit to which N-formylmethionyl-tRNA(fMet) subsequently binds. Helps modulate mRNA selection, yielding the 30S pre-initiation complex (PIC). Upon addition of the 50S ribosomal subunit IF-1, IF-2 and IF-3 are released leaving the mature 70S translation initiation complex. This is Translation initiation factor IF-1 from Ruegeria sp. (strain TM1040) (Silicibacter sp.).